The chain runs to 260 residues: Acetylglutamate kinase (260 aa).

Substrate is bound by residues G45 to G46, R67, and N159.

Belongs to the acetylglutamate kinase family. ArgB subfamily.

Its subcellular location is the cytoplasm. The catalysed reaction is N-acetyl-L-glutamate + ATP = N-acetyl-L-glutamyl 5-phosphate + ADP. It participates in amino-acid biosynthesis; L-arginine biosynthesis; N(2)-acetyl-L-ornithine from L-glutamate: step 2/4. Functionally, catalyzes the ATP-dependent phosphorylation of N-acetyl-L-glutamate. The sequence is that of Acetylglutamate kinase from Colwellia psychrerythraea (strain 34H / ATCC BAA-681) (Vibrio psychroerythus).